Reading from the N-terminus, the 636-residue chain is p-hydroxybenzoate-m-hydroxylase (636 aa).

FAD-binding positions include 11–40, 242–244, Tyr290, and Asp311; these read DIVI…HIDN and RLY. A helical transmembrane segment spans residues 12-33; sequence IVIVGAGPVGILLSLCMSRWGY. Residue Asn573 is glycosylated (N-linked (GlcNAc...) asparagine).

It belongs to the PheA/TfdB FAD monooxygenase family. FAD serves as cofactor.

It is found in the membrane. It catalyses the reaction 4-hydroxybenzoate + NADH + O2 + H(+) = 3,4-dihydroxybenzoate + NAD(+) + H2O. The catalysed reaction is 4-hydroxybenzoate + NADPH + O2 + H(+) = 3,4-dihydroxybenzoate + NADP(+) + H2O. Functionally, FAD-dependent monooxygenase; part of the benzoic acid degradation pathway also known as the protocatechuic acid pathway. Benzoic acid debradation begins with the conversion of benzoic acid into 4-hydroxybenzoic acid through hydroxylation by the benzoate-4-monooxygenase bphA, and its partner NADPH-cytochrome P450 reductase cprA which act as a mediator in electron donation from NADPH. 4-Hydroxybenzoic acid is then converted into 3,4-dihydroxybenzoic acid (also called protocatechuic acid) by the p-hydroxybenzoate-m-hydroxylase phhA. Protocatechuic acid is converted into 3-carboxy-cis,cis-muconic acid by the intradiol ring-cleavage dioxygenase prcA, which is further metabolized through the 3-oxoadipate pathway to finally enter the tricarboxylic acid cycle (TCA). The sequence is that of p-hydroxybenzoate-m-hydroxylase from Emericella nidulans (strain FGSC A4 / ATCC 38163 / CBS 112.46 / NRRL 194 / M139) (Aspergillus nidulans).